The sequence spans 347 residues: NADH-ubiquinone oxidoreductase chain 2 (347 aa).

Transmembrane regions (helical) follow at residues 3 to 23, 59 to 79, 95 to 115, 127 to 147, 149 to 169, 178 to 198, 200 to 220, 241 to 261, 274 to 294, and 325 to 345; these read PLTLIIIMFTLFMGTMITVFS, YFLTQATASMILMMAITLNIL, PVLITLALIIKLGMAPFHFWV, GLILLTWQKLAPLSILYQISP, INPTMMMSVAILSIMVGGWGG, ILAYSSIAHMGWMAAIITFNP, TMVLNLIIYILMTIPMFMMFM, VSTILITLMSLGGLPPLTGFI, GNIILPTAMAMLALLNLYFYM, and LITPLIILSTMLLPLTPALSV.

Belongs to the complex I subunit 2 family. In terms of assembly, core subunit of respiratory chain NADH dehydrogenase (Complex I) which is composed of 45 different subunits. Interacts with TMEM242.

Its subcellular location is the mitochondrion inner membrane. It catalyses the reaction a ubiquinone + NADH + 5 H(+)(in) = a ubiquinol + NAD(+) + 4 H(+)(out). Functionally, core subunit of the mitochondrial membrane respiratory chain NADH dehydrogenase (Complex I) which catalyzes electron transfer from NADH through the respiratory chain, using ubiquinone as an electron acceptor. Essential for the catalytic activity and assembly of complex I. The chain is NADH-ubiquinone oxidoreductase chain 2 from Oryctolagus cuniculus (Rabbit).